We begin with the raw amino-acid sequence, 152 residues long: MEDEEVAESWEEAADSGEIDRRLEKKLKITQKESRKSKSPPKVPIVIQDDSLPAGPPPQIRILKRPTSNGVVSSPNSTSRPTLPVKSLAQREAEYAEARKRILGSASPEEEQEKPILDRPTRISQPEDSRQPNNVIRQPLGPDGSQGFKQRR.

The residue at position 1 (M1) is an N-acetylmethionine. Residues 30–152 (TQKESRKSKS…DGSQGFKQRR (123 aa)) form a disordered region. A phosphoserine mark is found at S37, S39, and S51. Positions 42 to 107 (KVPIVIQDDS…ARKRILGSAS (66 aa)) constitute an SUZ domain. A compositionally biased stretch (polar residues) spans 66 to 81 (PTSNGVVSSPNSTSRP). Positions 89-100 (AQREAEYAEARK) are enriched in basic and acidic residues. Residues S105 and S107 each carry the phosphoserine modification. The region spanning 111–152 (EQEKPILDRPTRISQPEDSRQPNNVIRQPLGPDGSQGFKQRR) is the SUZ-C domain. A compositionally biased stretch (basic and acidic residues) spans 113 to 130 (EKPILDRPTRISQPEDSR).

This sequence belongs to the SZRD1 family.

This chain is SUZ RNA-binding domain-containing (SZRD1), found in Homo sapiens (Human).